A 178-amino-acid chain; its full sequence is Interleukin-1 receptor antagonist protein (178 aa).

The signal sequence occupies residues 1–26 (MEICWGPYSHLISLLLILLFHSEAAC). C92 and C142 are oxidised to a cystine. N110 carries N-linked (GlcNAc...) asparagine glycosylation.

This sequence belongs to the IL-1 family.

It localises to the secreted. The protein localises to the cytoplasm. Anti-inflammatory antagonist of interleukin-1 family of proinflammatory cytokines such as interleukin-1beta/IL1B and interleukin-1alpha/IL1A. Protects from immune dysregulation and uncontrolled systemic inflammation triggered by IL1 for a range of innate stimulatory agents such as pathogens. This chain is Interleukin-1 receptor antagonist protein (Il1rn), found in Mus musculus (Mouse).